A 212-amino-acid chain; its full sequence is Large ribosomal subunit protein uL3 (212 aa).

Q152 is modified (N5-methylglutamine).

It belongs to the universal ribosomal protein uL3 family. In terms of assembly, part of the 50S ribosomal subunit. Forms a cluster with proteins L14 and L19. Post-translationally, methylated by PrmB.

Its function is as follows. One of the primary rRNA binding proteins, it binds directly near the 3'-end of the 23S rRNA, where it nucleates assembly of the 50S subunit. This Chromohalobacter salexigens (strain ATCC BAA-138 / DSM 3043 / CIP 106854 / NCIMB 13768 / 1H11) protein is Large ribosomal subunit protein uL3.